The primary structure comprises 250 residues: Replicating protein (250 aa).

Disordered stretches follow at residues 1 to 23 and 168 to 250; these read MFQQ…PCEK and KAHM…KAFE. 2 stretches are compositionally biased toward basic and acidic residues: residues 13 to 23 and 178 to 190; these read GTDEPAHPCEK and DRLR…RTRA. Positions 218–237 are enriched in polar residues; it reads SRCSFTTPNRPRRTLPSSHP.

Required for replication. It likely regulates pTAR copy number. The polypeptide is Replicating protein (repA) (Rhizobium radiobacter (Agrobacterium tumefaciens)).